The sequence spans 101 residues: Large ribosomal subunit protein uL23 (101 aa).

Belongs to the universal ribosomal protein uL23 family. As to quaternary structure, part of the 50S ribosomal subunit. Contacts protein L29, and trigger factor when it is bound to the ribosome.

Its function is as follows. One of the early assembly proteins it binds 23S rRNA. One of the proteins that surrounds the polypeptide exit tunnel on the outside of the ribosome. Forms the main docking site for trigger factor binding to the ribosome. The polypeptide is Large ribosomal subunit protein uL23 (Kocuria rhizophila (strain ATCC 9341 / DSM 348 / NBRC 103217 / DC2201)).